A 1409-amino-acid chain; its full sequence is Mediator of RNA polymerase II transcription subunit 23 (1409 aa).

The disordered stretch occupies residues 1359–1409 (ASAAGQGPAQGGPQSQQPQTTGQAGGQPSVPQQQQQTQQQQPQQQQQVQQQ).

This sequence belongs to the Mediator complex subunit 23 family. Component of the Mediator complex.

The protein resides in the nucleus. Component of the Mediator complex, a coactivator involved in the regulated transcription of nearly all RNA polymerase II-dependent genes. Mediator functions as a bridge to convey information from gene-specific regulatory proteins to the basal RNA polymerase II transcription machinery. Mediator is recruited to promoters by direct interactions with regulatory proteins and serves as a scaffold for the assembly of a functional preinitiation complex with RNA polymerase II and the general transcription factors. The polypeptide is Mediator of RNA polymerase II transcription subunit 23 (MED23) (Aedes aegypti (Yellowfever mosquito)).